The sequence spans 101 residues: Enhancer of yellow 2 transcription factor (101 aa).

The protein belongs to the ENY2 family. In terms of assembly, component of the nuclear pore complex (NPC)-associated TREX-2/AMEX complex (anchoring and mRNA export complex), composed of e(y)2, xmas and PCID2. Within the TREX-2/ AMEX complex, interactions with xmas is required for localization to the nuclear periphery. Component of the SAGA transcription coactivator-HAT complexes, at least composed of Ada2b, e(y)2, Pcaf/Gcn5, Taf10 and Nipped-A/Trrap. Within the SAGA complex, e(y)2, Sgf11, and not/nonstop form an additional subcomplex of SAGA called the DUB module (deubiquitination module). Component of the THO complex, composed of at least e(y)2, HPR1, THO2, THOC5, THOC6 and THOC7. Interacts with Taf9. Interacts with su(Hw) (via zinc fingers). Interacts with the nuclear pore complex (NPC). Interaction between the TREX-2/AMEX complex and the ORC complex is required for ORC localization to mRNPs, and consequently mRNA export. Within the TREX-2/AMEX-ORC complex, interacts with Orc6 and (via N-terminus or C-terminus) with Orc3. Interacts with the zinc finger protein CG9890. As to expression, ubiquitous.

Its subcellular location is the nucleus. The protein resides in the nucleoplasm. It is found in the cytoplasm. It localises to the nucleus membrane. In terms of biological role, involved in mRNA export coupled transcription activation by association with both the TREX-2/AMEX and the SAGA complexes. The SAGA complex is a multiprotein complex that activates transcription by remodeling chromatin and mediating histone acetylation and deubiquitination. Within the SAGA complex, participates in a subcomplex that specifically deubiquitinates histone H2B. The SAGA complex is recruited to specific gene promoters by activators, where it is required for transcription. Required for nuclear receptor-mediated transactivation. Involved in transcription elongation by recruiting the THO complex onto nascent mRNA. The TREX-2/AMEX complex functions in docking export-competent ribonucleoprotein particles (mRNPs) to the nuclear entrance of the nuclear pore complex (nuclear basket). TREX-2/AMEX participates in mRNA export and accurate chromatin positioning in the nucleus by tethering genes to the nuclear periphery. Recruited to the su(Hw) insulators via its interaction with su(Hw) and participates in the barrier activity of such insulators. In contrast, it does not participate in the enhancer-blocking activity of the su(Hw) insulators. The chain is Enhancer of yellow 2 transcription factor from Drosophila melanogaster (Fruit fly).